Here is a 36-residue protein sequence, read N- to C-terminus: YCGLFGDLCTLDGTLACCIALELECIPLNDFVGICL.

3 disulfides stabilise this stretch: cysteine 2–cysteine 18, cysteine 9–cysteine 25, and cysteine 17–cysteine 35.

In terms of biological role, sialidase inhibitor. Competitively inhibits bacterial sialidases, but not viral sialidases. Does not inhibit glycosidases or proteases. Has no antitumor activity. This Asteropus simplex (Marine sponge) protein is Asteropin-A.